A 205-amino-acid chain; its full sequence is Putative 3-methyladenine DNA glycosylase (205 aa).

This sequence belongs to the DNA glycosylase MPG family.

This chain is Putative 3-methyladenine DNA glycosylase, found in Bacillus cereus (strain G9842).